The chain runs to 398 residues: MAKEKYDRSKPHVNIGTIGHVDHGKTTLTAAITTVLARRLPTSVNQPKDYASIDAAPEERERGITINTAHVEYETETRHYAHIDAPGHADYVKNMITGAAQMDGAILVVASTDGPMPQTREHILLSRQVGVKHLIVFMNKVDLVDDEELLELVEMEIRDLLSEYDFPGDDLPVIQGSALKALEGDSKYEDIIMELMSTVDEYIPEPERDTDKPLLLPVEDVFSITGRGTVASGRIDRGTVRVNDEIEIVGIKEETKKAVVTGVEMFRKQLDEGLAGDNVGILLRGVQRDEIERGQVIAKPGSINPHTKFKGEVYILSKDEGGRHTPFFNNYRPQFYFRTTDVTGSIELPAGTEMVMPGDNVTINVELIHPIAVEQGTTFSIREGGRTVGSGIVSEIEA.

Residues 10–207 (KPHVNIGTIG…TVDEYIPEPE (198 aa)) form the tr-type G domain. Positions 19-26 (GHVDHGKT) are G1. 19–26 (GHVDHGKT) is a GTP binding site. Threonine 26 serves as a coordination point for Mg(2+). Positions 63-67 (GITIN) are G2. The G3 stretch occupies residues 84 to 87 (DAPG). GTP contacts are provided by residues 84 to 88 (DAPGH) and 139 to 142 (NKVD). Residues 139-142 (NKVD) form a G4 region. Residues 177–179 (SAL) form a G5 region.

It belongs to the TRAFAC class translation factor GTPase superfamily. Classic translation factor GTPase family. EF-Tu/EF-1A subfamily. Monomer.

The protein localises to the cytoplasm. The enzyme catalyses GTP + H2O = GDP + phosphate + H(+). Its function is as follows. GTP hydrolase that promotes the GTP-dependent binding of aminoacyl-tRNA to the A-site of ribosomes during protein biosynthesis. The polypeptide is Elongation factor Tu (Streptococcus pyogenes serotype M49 (strain NZ131)).